Here is a 511-residue protein sequence, read N- to C-terminus: T-complex protein 1 subunit eta (511 aa).

This sequence belongs to the TCP-1 chaperonin family. In terms of assembly, component of the T-complex protein 1 (TCP1) complex.

The protein resides in the cytoplasm. Molecular chaperone; assists the folding of proteins upon ATP hydrolysis. This Encephalitozoon cuniculi (strain GB-M1) (Microsporidian parasite) protein is T-complex protein 1 subunit eta (CCT7).